Here is a 689-residue protein sequence, read N- to C-terminus: Potassium-transporting ATPase ATP-binding subunit (689 aa).

The next 4 helical transmembrane spans lie at 35-55 (VMFV…AILA), 62-82 (AAFT…ANFA), 220-240 (ALTI…ATLF), and 260-280 (VLVA…LSAI). Asp313 functions as the 4-aspartylphosphate intermediate in the catalytic mechanism. ATP is bound by residues Asp350, Glu354, 383 to 390 (FSAQTRMS), and Lys401. Asp524 and Asp528 together coordinate Mg(2+). A run of 3 helical transmembrane segments spans residues 594–614 (FAII…LNVM), 622–642 (AIMS…PLAL), and 665–685 (VGGL…LVAL).

This sequence belongs to the cation transport ATPase (P-type) (TC 3.A.3) family. Type IA subfamily. As to quaternary structure, the system is composed of three essential subunits: KdpA, KdpB and KdpC.

It is found in the cell inner membrane. It carries out the reaction K(+)(out) + ATP + H2O = K(+)(in) + ADP + phosphate + H(+). Its function is as follows. Part of the high-affinity ATP-driven potassium transport (or Kdp) system, which catalyzes the hydrolysis of ATP coupled with the electrogenic transport of potassium into the cytoplasm. This subunit is responsible for energy coupling to the transport system and for the release of the potassium ions to the cytoplasm. The chain is Potassium-transporting ATPase ATP-binding subunit from Serratia proteamaculans (strain 568).